A 506-amino-acid polypeptide reads, in one-letter code: Histidine ammonia-lyase (506 aa).

The 5-imidazolinone (Ala-Gly) cross-link spans 144–146 (ASG). Residue Ser145 is modified to 2,3-didehydroalanine (Ser).

The protein belongs to the PAL/histidase family. Post-translationally, contains an active site 4-methylidene-imidazol-5-one (MIO), which is formed autocatalytically by cyclization and dehydration of residues Ala-Ser-Gly.

It localises to the cytoplasm. It catalyses the reaction L-histidine = trans-urocanate + NH4(+). Its pathway is amino-acid degradation; L-histidine degradation into L-glutamate; N-formimidoyl-L-glutamate from L-histidine: step 1/3. This Legionella pneumophila subsp. pneumophila (strain Philadelphia 1 / ATCC 33152 / DSM 7513) protein is Histidine ammonia-lyase.